Reading from the N-terminus, the 661-residue chain is MEGPAFSKSPKDKTIERAFLGVLGILFVTGGLASRDNPHQVYNITWEVTNGEQDTVWAVTGNHPLWTWWPDLTPDLCMLALHGPTHWGLDNHPPYSSPPGPPCCSGDAGAVSGCARDCDEPLTSYSPRCNTAWNRLKLARVTHAPKEGFYICPGSHRPRWARSCGGLDAYYCASWGCETTGRAAWNPTSSWDYITVSNNLTSSQATKACKNNGWCNPLVIRFTGPGKRATSWTTGHFWGLRLYISGHDPGLTFGIRLKVTDLGPRVPIGPNPVLSDQRPPSRPVPARPPPPSASPSTPTIPPQQGTGDRLLNLVQGAYLTLNMTDPTRTQECWLCLVSEPPYYEGVAVLREYTSHETAPANCSSGSQHKLTLSEVTGQGRCLGTVPKTHQALCNRTEPTVSGSNYLVAPEGTLWACSTGLTPCLSTTVLNLTTDYCVLVELWPKVTYHSPDYVYTQFEPGARFRREPVSLTLALLPEGLTMGGIAAGVGTGTTALVATQQFQQLQAAMHNDLKEVEKSITNLEKSLTSLSEVVLQNRRGLDLLFLKEGGLCAALKEECCFYADHTGLVRDSMAKLRERLNQRQKLFESGQGWFEGLFNRSPWFTTLISTIMGPLIVLLLILLFGPCILNRLVQFVKDRISVVQALVLTQQYHQLKPIEYEP.

Positions 1–33 (MEGPAFSKSPKDKTIERAFLGVLGILFVTGGLA) are cleaved as a signal peptide. The receptor-binding domain (RBD) stretch occupies residues 32–267 (LASRDNPHQV…KVTDLGPRVP (236 aa)). Over 34–606 (SRDNPHQVYN…FNRSPWFTTL (573 aa)) the chain is Extracellular. N-linked (GlcNAc...) asparagine; by host glycosylation is present at Asn-43. 5 disulfide bridges follow: Cys-77–Cys-129, Cys-103–Cys-118, Cys-104–Cys-114, Cys-152–Cys-172, and Cys-164–Cys-177. His-86 is a Zn(2+) binding site. Residue Asp-117 coordinates Zn(2+). An N-linked (GlcNAc...) asparagine; by host glycan is attached at Asn-199. Cys-209 and Cys-215 are joined by a disulfide. The segment at 268–308 (IGPNPVLSDQRPPSRPVPARPPPPSASPSTPTIPPQQGTGD) is disordered. Pro residues predominate over residues 280-301 (PSRPVPARPPPPSASPSTPTIP). A glycan (N-linked (GlcNAc...) asparagine; by host) is linked at Asn-322. 6 disulfide bridges follow: Cys-332–Cys-335, Cys-332–Cys-559, Cys-362–Cys-416, Cys-381–Cys-393, Cys-423–Cys-436, and Cys-551–Cys-558. The CXXC motif lies at 332–335 (CWLC). N-linked (GlcNAc...) asparagine; by host glycosylation is present at Asn-361. Residues Asn-394 and Asn-430 are each glycosylated (N-linked (GlcNAc...) asparagine; by host). The interval 468 to 488 (VSLTLALLPEGLTMGGIAAGV) is fusion peptide. Positions 497–533 (ATQQFQQLQAAMHNDLKEVEKSITNLEKSLTSLSEVV) form a coiled coil. Residues 534–550 (LQNRRGLDLLFLKEGGL) are immunosuppression. The CX6CC motif lies at 551–559 (CAALKEECC). Residues 607–627 (ISTIMGPLIVLLLILLFGPCI) traverse the membrane as a helical segment. Residue Cys-626 is the site of S-palmitoyl cysteine; by host attachment. Residues 628–661 (LNRLVQFVKDRISVVQALVLTQQYHQLKPIEYEP) lie on the Cytoplasmic side of the membrane. The YXXL motif; contains endocytosis signal motif lies at 651–654 (YHQL).

In terms of assembly, the mature envelope protein (Env) consists of a trimer of SU-TM heterodimers attached by a labile interchain disulfide bond. Post-translationally, specific enzymatic cleavages in vivo yield mature proteins. Envelope glycoproteins are synthesized as an inactive precursor that is N-glycosylated and processed likely by host cell furin or by a furin-like protease in the Golgi to yield the mature SU and TM proteins. The cleavage site between SU and TM requires the minimal sequence [KR]-X-[KR]-R. The R-peptide is released from the C-terminus of the cytoplasmic tail of the TM protein upon particle formation as a result of proteolytic cleavage by the viral protease. Cleavage of this peptide is required for TM to become fusogenic. The CXXC motif is highly conserved across a broad range of retroviral envelope proteins. It is thought to participate in the formation of a labile disulfide bond possibly with the CX6CC motif present in the transmembrane protein. Isomerization of the intersubunit disulfide bond to an SU intrachain disulfide bond is thought to occur upon receptor recognition in order to allow membrane fusion. In terms of processing, the transmembrane protein is palmitoylated. Post-translationally, the R-peptide is palmitoylated.

It is found in the virion membrane. Its subcellular location is the host cell membrane. Functionally, the surface protein (SU) attaches the virus to the host cell by binding to its receptor. This interaction triggers the refolding of the transmembrane protein (TM) and is thought to activate its fusogenic potential by unmasking its fusion peptide. Fusion occurs at the host cell plasma membrane. The transmembrane protein (TM) acts as a class I viral fusion protein. Under the current model, the protein has at least 3 conformational states: pre-fusion native state, pre-hairpin intermediate state, and post-fusion hairpin state. During viral and target cell membrane fusion, the coiled coil regions (heptad repeats) assume a trimer-of-hairpins structure, positioning the fusion peptide in close proximity to the C-terminal region of the ectodomain. The formation of this structure appears to drive apposition and subsequent fusion of viral and target cell membranes. Membranes fusion leads to delivery of the nucleocapsid into the cytoplasm. This Mus musculus (Mouse) protein is Envelope glycoprotein (env).